The sequence spans 87 residues: Small ribosomal subunit protein uS19 (87 aa).

The protein belongs to the universal ribosomal protein uS19 family.

In terms of biological role, protein S19 forms a complex with S13 that binds strongly to the 16S ribosomal RNA. This chain is Small ribosomal subunit protein uS19 (rpsS), found in Mycoplasma pneumoniae (strain ATCC 29342 / M129 / Subtype 1) (Mycoplasmoides pneumoniae).